The chain runs to 101 residues: NAD(P)H-quinone oxidoreductase subunit 4L, chloroplastic (101 aa).

A run of 3 helical transmembrane segments spans residues 2–22 (IFEH…YGLI), 32–52 (MCLE…SDFF), and 61–81 (IFSI…PAIV).

It belongs to the complex I subunit 4L family. NDH is composed of at least 16 different subunits, 5 of which are encoded in the nucleus.

The protein resides in the plastid. It localises to the chloroplast thylakoid membrane. The catalysed reaction is a plastoquinone + NADH + (n+1) H(+)(in) = a plastoquinol + NAD(+) + n H(+)(out). It catalyses the reaction a plastoquinone + NADPH + (n+1) H(+)(in) = a plastoquinol + NADP(+) + n H(+)(out). NDH shuttles electrons from NAD(P)H:plastoquinone, via FMN and iron-sulfur (Fe-S) centers, to quinones in the photosynthetic chain and possibly in a chloroplast respiratory chain. The immediate electron acceptor for the enzyme in this species is believed to be plastoquinone. Couples the redox reaction to proton translocation, and thus conserves the redox energy in a proton gradient. The protein is NAD(P)H-quinone oxidoreductase subunit 4L, chloroplastic of Phaseolus vulgaris (Kidney bean).